A 605-amino-acid polypeptide reads, in one-letter code: Formin-binding protein 1-like (605 aa).

The region spanning 1-263 is the F-BAR domain; that stretch reads MSWGTELWDQ…AAKSVDERRD (263 aa). The stretch at 66–258 forms a coiled coil; that stretch reads FTSCIAFFNI…EGMILAAKSV (193 aa). Positions 245–535 are interaction with CDC42; that stretch reads SKCLEGMILA…EFDDEFEDDD (291 aa). A Phosphoserine modification is found at S295. The tract at residues 325-345 is disordered; the sequence is FGKKPKPQSPPLTPTSLFTSS. A coiled-coil region spans residues 392–484; that stretch reads LEDFSHLPPE…VEGKTGVRGD (93 aa). One can recognise an REM-1 domain in the interval 397 to 474; sequence HLPPEQRRKK…IHKNEAWLSE (78 aa). Over residues 480–490 the composition is skewed to basic and acidic residues; the sequence is GVRGDRRHSSD. The tract at residues 480–539 is disordered; it reads GVRGDRRHSSDINHLVTQGRESPEGSYTDDANQEVRGPPQQHGHHSEFDDEFEDDDPLPA. A phosphoserine mark is found at S488, S501, and S505. The interaction with DNM1 stretch occupies residues 522 to 605; that stretch reads GHHSEFDDEF…VTLEKNSKGS (84 aa). Residues 527–536 show a composition bias toward acidic residues; that stretch reads FDDEFEDDDP. An SH3 domain is found at 538–599; it reads PAIGHCKAIY…PTTYIDVTLE (62 aa). Positions 541–597 are interaction with DNM2 and WASL; that stretch reads GHCKAIYPFDGHNEGTLAMKEGEVLYIIEEDKGDGWTRARRQNGEEGYVPTTYIDVT. An interaction with DAAM1, DIAPH1 and DIAPH2 region spans residues 541-605; it reads GHCKAIYPFD…VTLEKNSKGS (65 aa).

This sequence belongs to the FNBP1 family. In terms of assembly, homodimerizes, the dimers can polymerize end-to-end to form filamentous structures. Interacts with GTP-bound CDC42. Interacts with DAAM1, DIAPH1, DIAPH2, DNM1, DNM2 and WASL/N-WASP. Interacts with ATG3. Interacts (via SH3 domain) with ABI1, WASF2, CDC42 and WIPF1. In terms of tissue distribution, isoform 1 is expressed in brain. Isoform 2 is expressed in brain, kidney and lung. Within the brain expression is seen in cortical neurons, hippocampal pyramidal neurons, hypothalamus and piriform cortex.

Its subcellular location is the cytoplasm. It localises to the cytoskeleton. The protein resides in the cell cortex. The protein localises to the cytoplasmic vesicle. It is found in the cell membrane. In terms of biological role, required to coordinate membrane tubulation with reorganization of the actin cytoskeleton during endocytosis. May bind to lipids such as phosphatidylinositol 4,5-bisphosphate and phosphatidylserine and promote membrane invagination and the formation of tubules. Also promotes CDC42-induced actin polymerization by activating the WASL-WASPIP complex, the predominant form of WASL/N-WASP in cells. Actin polymerization may promote the fission of membrane tubules to form endocytic vesicles. Essential for autophagy of intracellular bacterial pathogens. May negatively regulate neurite extension and axon branching in developing neurons. The polypeptide is Formin-binding protein 1-like (Fnbp1l) (Rattus norvegicus (Rat)).